The chain runs to 359 residues: Alanine racemase, biosynthetic (359 aa).

Lys-34 serves as the catalytic Proton acceptor; specific for D-alanine. Lys-34 carries the N6-(pyridoxal phosphate)lysine modification. Lys-122 bears the N6-carboxylysine mark. Arg-129 contacts substrate. The active-site Proton acceptor; specific for L-alanine is the Tyr-255. Met-303 lines the substrate pocket.

The protein belongs to the alanine racemase family. Homodimer. Pyridoxal 5'-phosphate is required as a cofactor.

The catalysed reaction is L-alanine = D-alanine. The protein operates within amino-acid biosynthesis; D-alanine biosynthesis; D-alanine from L-alanine: step 1/1. It participates in cell wall biogenesis; peptidoglycan biosynthesis. In terms of biological role, catalyzes the interconversion of L-alanine and D-alanine. Provides the D-alanine required for cell wall biosynthesis. The polypeptide is Alanine racemase, biosynthetic (Escherichia coli (strain K12)).